The chain runs to 593 residues: RNA-binding protein 47 (593 aa).

Positions 1-20 (MTAEDSTAAMSSDSAAGSSA) are enriched in low complexity. A disordered region spans residues 1 to 25 (MTAEDSTAAMSSDSAAGSSAKVPEG). RRM domains lie at 71 to 149 (CEVF…CSVD), 151 to 233 (CRLF…WAEP), and 246 to 318 (KILY…LAKP). Position 332 is an omega-N-methylarginine (R332). Asymmetric dimethylarginine; alternate occurs at positions 394 and 405. Omega-N-methylarginine; alternate is present on residues R394 and R405.

Belongs to the RRM RBM47 family. In terms of assembly, homodimer. Interacts with A1CF. Interacts with APOBEC1; form an mRNA editing complex. Interacts with RBPMS.

The protein resides in the nucleus. Its subcellular location is the cytoplasm. Single-stranded RNA-binding protein that functions in a variety of RNA processes, including alternative splicing, RNA stabilization, and RNA editing. Functions as an enzyme-substrate adapter for the cytidine deaminase APOBEC1. With APOBEC1 forms an mRNA editing complex involved into cytidine to uridine editing of a variety of mRNA molecules. Through the binding of their 3'UTR, also stabilizes a variety of mRNAs and regulates the expression of genes such as the interferon alpha/beta receptor and interleukin-10. Also involved in the alternative splicing of several genes including TJP1. Binds the pre-mRNA (U)GCAUG consensus sequences in downstream intronic regions of alternative exons, regulating their exclusion and inclusion into mRNAs. Independently of its RNA-binding activity, could negatively regulate MAVS by promoting its lysosomal degradation. This chain is RNA-binding protein 47, found in Homo sapiens (Human).